A 445-amino-acid chain; its full sequence is Histone acetyltransferase of the MYST family 1 (445 aa).

A Tudor-knot domain is found at 60–118 (LEVGTRVMCQWRDGKYHPVKVIERRKNYNGGHNDYEYYVHYTEFNRRLDEWIKLEQLDL). Positions 169–440 (TKVKNIATIE…VDVSKMIWTP (272 aa)) constitute an MYST-type HAT domain. A C2HC MYST-type zinc finger spans residues 202 to 227 (LFFCEFCLSFMKRKEQLQRHMRKCDL). Lysine 269 bears the N6-acetyllysine; by autocatalysis mark. Residues 312–314 (ILT) and 319–325 (QRKGYGK) each bind acetyl-CoA. The active-site Proton donor/acceptor is glutamate 345. Residue serine 349 participates in acetyl-CoA binding.

This sequence belongs to the MYST (SAS/MOZ) family. Interacts with MRG1 and MRG2. Component of the NuA4 histone acetyltransferase complex. Autoacetylation at Lys-269 is required for proper function. In terms of tissue distribution, expressed in cotyledons, leaves, stems, roots and, at higher levels in developing flowers, particularly in the anthers and gynoecia. Constitutively expressed in all tissues, predominantly in shoot apical meristem.

The protein localises to the nucleus. The enzyme catalyses L-lysyl-[protein] + acetyl-CoA = N(6)-acetyl-L-lysyl-[protein] + CoA + H(+). In terms of biological role, histone acetyltransferase which may be involved in transcriptional activation. Acetylates 'Lys-5' of histone H4 (H4K5ac). Essential for gametophyte development. Involved in DNA repair after UV-B exposure. Negative regulator of flowering controlling the H4K5ac levels in the FLC chromatin. The polypeptide is Histone acetyltransferase of the MYST family 1 (Arabidopsis thaliana (Mouse-ear cress)).